Reading from the N-terminus, the 251-residue chain is uncharacterized protein (251 aa).

The protein belongs to the chlamydial CPn_0206/CT_203/TC_0475 family.

This is an uncharacterized protein from Chlamydia trachomatis serovar D (strain ATCC VR-885 / DSM 19411 / UW-3/Cx).